The following is a 344-amino-acid chain: rRNA 2'-O-methyltransferase fibrillarin (344 aa).

The disordered stretch occupies residues methionine 1 to isoleucine 113. Gly residues predominate over residues proline 8–glycine 107. An asymmetric dimethylarginine mark is found at arginine 9, arginine 23, arginine 25, arginine 40, arginine 42, arginine 48, arginine 51, arginine 58, arginine 63, arginine 71, arginine 77, arginine 83, arginine 88, arginine 93, and arginine 98. S-adenosyl-L-methionine contacts are provided by residues threonine 197–threonine 198, glutamate 216–phenylalanine 217, aspartate 241–alanine 242, and aspartate 261–glutamine 264.

The protein belongs to the methyltransferase superfamily. Fibrillarin family. As to quaternary structure, component of box C/D small nucleolar ribonucleoprotein (snoRNP) particles. It is associated with the U3, U8 and U13 small nuclear RNAs. Post-translationally, by homology to other fibrillarins, some or all of the N-terminal domain arginines are modified to asymmetric dimethylarginine (DMA).

Its subcellular location is the nucleus. It localises to the nucleolus. It carries out the reaction L-glutaminyl-[histone H2A] + S-adenosyl-L-methionine = N(5)-methyl-L-glutaminyl-[histone H2A] + S-adenosyl-L-homocysteine + H(+). S-adenosyl-L-methionine-dependent methyltransferase that has the ability to methylate both RNAs and proteins. Involved in pre-rRNA processing. Utilizes the methyl donor S-adenosyl-L-methionine to catalyze the site-specific 2'-hydroxyl methylation of ribose moieties in pre-ribosomal RNA. Site specificity is provided by a guide RNA that base pairs with the substrate. Methylation occurs at a characteristic distance from the sequence involved in base pairing with the guide RNA. Also acts as a protein methyltransferase by mediating methylation of 'Gln-105' of histone H2A (H2AQ105me), a modification that impairs binding of the FACT complex and is specifically present at 35S ribosomal DNA locus. The chain is rRNA 2'-O-methyltransferase fibrillarin from Drosophila melanogaster (Fruit fly).